The primary structure comprises 43 residues: Protein PsbN (43 aa).

A helical membrane pass occupies residues 7 to 27 (IAIFISCLIVSFTGYALYTAF).

Belongs to the PsbN family.

Its subcellular location is the plastid. It localises to the chloroplast thylakoid membrane. May play a role in photosystem I and II biogenesis. In Psilotum nudum (Whisk fern), this protein is Protein PsbN.